The chain runs to 467 residues: Transcription factor bHLH3 (467 aa).

In terms of domain architecture, bHLH spans 316–365 (EEALNHVEAERQRREKLNQRFYALRAVVPNISKMDKASLLADAITYITDM).

In terms of assembly, homodimer.

Its subcellular location is the nucleus. This Arabidopsis thaliana (Mouse-ear cress) protein is Transcription factor bHLH3 (BHLH3).